Consider the following 137-residue polypeptide: Large ribosomal subunit protein uL16 (137 aa).

Belongs to the universal ribosomal protein uL16 family. Part of the 50S ribosomal subunit.

Binds 23S rRNA and is also seen to make contacts with the A and possibly P site tRNAs. The sequence is that of Large ribosomal subunit protein uL16 from Wolbachia sp. subsp. Brugia malayi (strain TRS).